The sequence spans 305 residues: Ribosomal RNA small subunit methyltransferase H (305 aa).

Residues 33–35, aspartate 51, phenylalanine 82, aspartate 96, and glutamine 103 contribute to the S-adenosyl-L-methionine site; that span reads GGY.

Belongs to the methyltransferase superfamily. RsmH family.

The protein resides in the cytoplasm. The enzyme catalyses cytidine(1402) in 16S rRNA + S-adenosyl-L-methionine = N(4)-methylcytidine(1402) in 16S rRNA + S-adenosyl-L-homocysteine + H(+). Specifically methylates the N4 position of cytidine in position 1402 (C1402) of 16S rRNA. In Rickettsia bellii (strain OSU 85-389), this protein is Ribosomal RNA small subunit methyltransferase H.